The sequence spans 166 residues: uncharacterized protein (166 aa).

This protein may be involved in virus assembly. Essential for virus function. This is an uncharacterized protein from Sulfolobus spindle-shape virus 1 (SSV1).